The chain runs to 286 residues: ATP phosphoribosyltransferase (286 aa).

It belongs to the ATP phosphoribosyltransferase family. Long subfamily. Mg(2+) serves as cofactor.

The protein localises to the cytoplasm. The catalysed reaction is 1-(5-phospho-beta-D-ribosyl)-ATP + diphosphate = 5-phospho-alpha-D-ribose 1-diphosphate + ATP. The protein operates within amino-acid biosynthesis; L-histidine biosynthesis; L-histidine from 5-phospho-alpha-D-ribose 1-diphosphate: step 1/9. Feedback inhibited by histidine. Its function is as follows. Catalyzes the condensation of ATP and 5-phosphoribose 1-diphosphate to form N'-(5'-phosphoribosyl)-ATP (PR-ATP). Has a crucial role in the pathway because the rate of histidine biosynthesis seems to be controlled primarily by regulation of HisG enzymatic activity. This is ATP phosphoribosyltransferase from Arthrobacter sp. (strain FB24).